The chain runs to 384 residues: Gibberellin 3-beta-dioxygenase 1 (384 aa).

A Fe2OG dioxygenase domain is found at threonine 225 to proline 327. Fe cation contacts are provided by histidine 250, aspartate 252, and histidine 308. 2-oxoglutarate is bound by residues arginine 318 and serine 320.

The protein belongs to the iron/ascorbate-dependent oxidoreductase family. Requires L-ascorbate as cofactor. It depends on Fe(2+) as a cofactor. In terms of tissue distribution, expressed in unopened flowers.

It carries out the reaction gibberellin A20 + 2-oxoglutarate + O2 = gibberellin A1 + succinate + CO2. The protein operates within plant hormone biosynthesis; gibberellin biosynthesis. Its function is as follows. Catalyzes the 3-beta-hydroxylation of the inactive gibberellin precursors, leading to the formation of bioactive gibberellins. In vitro, converts the precursors GA20, GA5, GA44 and GA9 to the corresponding 3-beta-hydroxylated bioactive products GA1, GA3, GA38 and GA4, respectively. Involved in the production of bioactive GA for vegetative growth and development. May possess 2,3-desaturase activity, catalyzing the conversion of GA9 to 2,3-dehydro-GA9, and GA20 to GA5 (2,3-dehydro GA20). May possess 2-beta-hydroxylase activity, catalyzing the conversion of GA1 and GA4 to the corresponding 2-beta-hydroxylated products GA8 and GA34, respectively. The protein is Gibberellin 3-beta-dioxygenase 1 of Oryza sativa subsp. japonica (Rice).